Reading from the N-terminus, the 971-residue chain is MASVRASPRSALLLLLAAAGVAEVTGGLAPGSAGAVCCNHSKDNQMCRDVCEQIFSSKSESRLKHLLQRAPDYCPETMVEIWSCMNSSLPGVFKKSDGWVGLGCCELAIGLECRQACKQASSKNDISKVCRKEYENALFSCISRNEMGSVCCSYAGHHTNCREFCQAIFRTDSSPGPSQIKAVENYCASISPQLIHCVNNYTQSYPMRNPTDSLYCCDRAEDHACQNACKRILMSKKTEMEIVDGLIEGCKTQPLPQDPLWQCFLESSQSVHPGVTVHPPPSTGLDGAKLHCCSKANTSTCRELCTKLYSMSWGNTQSWQEFDRICEYNPVEVSMLTCLADVREPCQLGCTNLTYCTNFNNRPTELFRSCTAQSDQGAMSDMKLWEKGSIKMPFISIPVLDIKTCQPEMWKAVACSLQIKPCHSKSRGSIICKSDCVEILKKCGDQNKFPEEHTAESICEFLSPADDLESCIPLDTYLRPSALGNIIEEVTHPCNPNPCPANELCEVNRKGCPSADPCLPYSCVQGCKLGEASDFIVRQGTLIQVPSSAGEVGCYKICSCGQSGLLENCMEMHCIDLQKSCIVGGKRKSHGTSFTIDCNVCSCFAGNLVCSTRLCLSEHSSDDDRRTFTGLPCNCADQFVPVCAQNGRTYPSACIARCVGLQDHQFEFGPCISKNPCNPNLCPKSQRCVPKPQVCLTTFDKFGCSQYECVPRQLTCDQARDPVCDTDHMEHSNLCTLYQRGKSLSYRGPCQPFCRAKEPVCGHNGETYSSVCAAYSDRVAVDYYGPCQAVGVLSEYSAVAECAAVKCPSLSAIGCKPIIPPGACCPLCAGMLRVLFDKEKLDTIAKVTSKKPITVVEILQKVRMHVSVPQCDVFGYLSIESEIVILIIPVDHYPKALQIEACNKEAEKIESLINSDSPTLASHVPLSALIISQVQVSSSLPSSAVVGRPLFHSLLLLLSLGLTVHLLWTRP.

An N-terminal signal peptide occupies residues 1–22 (MASVRASPRSALLLLLAAAGVA). Residues 37 to 84 (CCNHSKDNQMCRDVCEQIFSSKSESRLKHLLQRAPDYCPETMVEIWSC) form a Knot 1 repeat. The 5 X Knot repeats stretch occupies residues 37–338 (CCNHSKDNQM…NPVEVSMLTC (302 aa)). Residues Asn39 and Asn86 are each glycosylated (N-linked (GlcNAc...) asparagine). Knot repeat units follow at residues 104–141 (CCEL…LFSC) and 151–197 (CCSY…LIHC). Asn200 is a glycosylation site (N-linked (GlcNAc...) asparagine). 2 Knot repeats span residues 216 to 263 (CCDR…LWQC) and 292 to 338 (CCSK…MLTC). Asn297 and Asn352 each carry an N-linked (GlcNAc...) asparagine glycan. Kazal-like domains are found at residues 627-673 (TFTG…PCIS), 698-752 (TFDK…PCQP), and 753-789 (FCRA…PCQA). 6 disulfide bridges follow: Cys633/Cys658, Cys635/Cys654, Cys643/Cys671, Cys716/Cys735, Cys724/Cys750, and Cys761/Cys787. In terms of domain architecture, Kazal-like 2; degenerate spans 704-750 (CSQYECVPRQLTCDQARDPVCDTDHMEHSNLCTLYQRGKSLSYRGPC). Ser942 carries the GPI-anchor amidated serine lipid modification. The propeptide at 943–971 (SAVVGRPLFHSLLLLLSLGLTVHLLWTRP) is removed in mature form.

The protein belongs to the RECK family. Interacts (via knot repeats) with WNT7A (via disordered linker region); the interaction is direct. Interacts (via knot repeats) with WNT7B (via disordered linker region); the interaction is direct. Interacts with ADGRA2; the interaction is direct. Interacts with MMP9.

It is found in the cell membrane. Functionally, functions together with ADGRA2 to enable brain endothelial cells to selectively respond to Wnt7 signals (WNT7A or WNT7B). Plays a key role in Wnt7-specific responses: required for central nervous system (CNS) angiogenesis and blood-brain barrier regulation. Acts as a Wnt7-specific coactivator of canonical Wnt signaling by decoding Wnt ligands: acts by interacting specifically with the disordered linker region of Wnt7, thereby conferring ligand selectivity for Wnt7. ADGRA2 is then required to deliver RECK-bound Wnt7 to frizzled by assembling a higher-order RECK-ADGRA2-Fzd-LRP5-LRP6 complex. Also acts as a serine protease inhibitor: negatively regulates matrix metalloproteinase-9 (MMP9) by suppressing MMP9 secretion and by direct inhibition of its enzymatic activity. Also inhibits metalloproteinase activity of MMP2 and MMP14 (MT1-MMP). The sequence is that of Reversion-inducing cysteine-rich protein with Kazal motifs from Mus musculus (Mouse).